Consider the following 792-residue polypeptide: Phenylalanine--tRNA ligase beta subunit (792 aa).

The tRNA-binding domain occupies 39 to 147 (GESLGQVVVA…DDAPVGQALA (109 aa)). Residues 400–475 (PQPARIRLRR…RIHGYDRVPT (76 aa)) form the B5 domain. Mg(2+)-binding residues include Asp-453, Asp-459, Glu-462, and Glu-463. Residues 698-791 (SRFPSVRRDL…IEREHRARIR (94 aa)) enclose the FDX-ACB domain.

Belongs to the phenylalanyl-tRNA synthetase beta subunit family. Type 1 subfamily. As to quaternary structure, tetramer of two alpha and two beta subunits. Requires Mg(2+) as cofactor.

It is found in the cytoplasm. The enzyme catalyses tRNA(Phe) + L-phenylalanine + ATP = L-phenylalanyl-tRNA(Phe) + AMP + diphosphate + H(+). The chain is Phenylalanine--tRNA ligase beta subunit from Xanthomonas euvesicatoria pv. vesicatoria (strain 85-10) (Xanthomonas campestris pv. vesicatoria).